A 356-amino-acid chain; its full sequence is L-Ala-D/L-Glu epimerase (356 aa).

A substrate-binding site is contributed by 161–163 (KVK). Positions 191, 219, and 244 each coordinate Mg(2+). Residues Lys268 and 320 to 322 (DLD) contribute to the substrate site.

The protein belongs to the mandelate racemase/muconate lactonizing enzyme family. Requires Mg(2+) as cofactor.

It catalyses the reaction L-alanyl-L-glutamate = L-alanyl-D-glutamate. Functionally, dipeptide epimerase with a preference for substrates containing a Glu residue in the second position. Catalyzes the epimerization of L-Ala-L-Glu, L-Ser-L-Glu, L-Thr-L-Glu, L-Val-L-Glu, L-Gly-L-Glu and L-Thr-L-Glu (in vitro). May play a role in the metabolism of the murein peptide, of which L-Ala-D-Glu is a component. The polypeptide is L-Ala-D/L-Glu epimerase (Francisella tularensis subsp. novicida (strain U112)).